Here is a 136-residue protein sequence, read N- to C-terminus: Flagellar basal-body rod protein FlgC (136 aa).

The protein belongs to the flagella basal body rod proteins family. The basal body constitutes a major portion of the flagellar organelle and consists of four rings (L,P,S, and M) mounted on a central rod. The rod consists of about 26 subunits of FlgG in the distal portion, and FlgB, FlgC and FlgF are thought to build up the proximal portion of the rod with about 6 subunits each.

The protein localises to the bacterial flagellum basal body. The sequence is that of Flagellar basal-body rod protein FlgC (flgC) from Buchnera aphidicola subsp. Acyrthosiphon pisum (strain APS) (Acyrthosiphon pisum symbiotic bacterium).